Consider the following 150-residue polypeptide: Ribonuclease HI (150 aa).

Residues Met-1–Asp-142 form the RNase H type-1 domain. Mg(2+) is bound by residues Asp-10, Glu-48, Asp-70, and Asp-134.

The protein belongs to the RNase H family. Monomer. Requires Mg(2+) as cofactor.

It is found in the cytoplasm. The catalysed reaction is Endonucleolytic cleavage to 5'-phosphomonoester.. Endonuclease that specifically degrades the RNA of RNA-DNA hybrids. This chain is Ribonuclease HI, found in Pseudomonas syringae pv. tomato (strain ATCC BAA-871 / DC3000).